Here is a 924-residue protein sequence, read N- to C-terminus: Nodulation receptor kinase (924 aa).

The first 29 residues, 1-29 (MMELRVICIIRLVVACVLCLCIFIRSASS), serve as a signal peptide directing secretion. Residues 361–382 (EVIQKMRKELLLQNQDNEALES) are a coiled coil. LRR repeat units follow at residues 406–428 (VITK…VTEM), 430–452 (KLQI…PPSS), 453–475 (LLIS…IISL), and 477–498 (HLNS…AKLN). Residues 520–540 (FMIGAITSGSILITLAVVILF) form a helical membrane-spanning segment. Residues 595–872 (EKYKTLIGEG…IVRELEDALI (278 aa)) form the Protein kinase domain. ATP-binding positions include 601–609 (IGEGGFGSV) and Lys623. Residue Asp721 is the Proton acceptor of the active site.

This sequence belongs to the protein kinase superfamily. Ser/Thr protein kinase family. Post-translationally, may be phosphorylated.

The protein resides in the membrane. The catalysed reaction is L-seryl-[protein] + ATP = O-phospho-L-seryl-[protein] + ADP + H(+). The enzyme catalyses L-threonyl-[protein] + ATP = O-phospho-L-threonyl-[protein] + ADP + H(+). In terms of biological role, involved in the perception of symbiotic fungi and bacteria and required for the calcium spiking. Part of the perception/transduction system leading to nodulation or mycorrhizal infection. This Pisum sativum (Garden pea) protein is Nodulation receptor kinase (NORK).